The following is a 500-amino-acid chain: Glutathione reductase (500 aa).

2 residues coordinate FAD: S12 and G13. S12 serves as a coordination point for glutathione. Position 19 (R19) interacts with glutathione. Residues E32, T39, C40, and K48 each coordinate FAD. A disulfide bridge links C40 with C45. Y95 lines the glutathione pocket. Residue A111 coordinates FAD. Positions 187, 190, 207, 213, and 272 each coordinate NADP(+). FAD-binding residues include D312 and T354. Glutathione is bound at residue R362. V384 contacts NADP(+). H485 contacts FAD. H485 serves as the catalytic Proton acceptor.

It belongs to the class-I pyridine nucleotide-disulfide oxidoreductase family. As to quaternary structure, homodimer. Requires FAD as cofactor.

It localises to the cytoplasm. It carries out the reaction 2 glutathione + NADP(+) = glutathione disulfide + NADPH + H(+). Functionally, catalyzes the reduction of glutathione disulfide (GSSG) to reduced glutathione (GSH). Constitutes the major mechanism to maintain a high GSH:GSSG ratio in the cytosol. The protein is Glutathione reductase of Plasmodium falciparum (isolate K1 / Thailand).